The following is a 449-amino-acid chain: Gamma-aminobutyric acid receptor subunit delta (449 aa).

A signal peptide spans 1 to 24; the sequence is MDVLGWLLLPLLLLCTQPHHGARA. Topologically, residues 25–251 are extracellular; sequence MNDIGDYVGS…QLRRNRGVYI (227 aa). Asn-103 and Asn-106 each carry an N-linked (GlcNAc...) asparagine glycan. The cysteines at positions 164 and 178 are disulfide-linked. A helical transmembrane segment spans residues 252-271; that stretch reads IQSYMPSVLLVAMSWVSFWI. The Cytoplasmic portion of the chain corresponds to 272–275; that stretch reads SQAA. Residues 276-298 traverse the membrane as a helical segment; it reads VPARVSLGITTVLTMTTLMVSAR. Residues 299–308 lie on the Extracellular side of the membrane; the sequence is SSLPRASAIK. A helical membrane pass occupies residues 309–331; sequence ALDVYFWICYVFVFAALVEYAFA. Topologically, residues 332–423 are cytoplasmic; the sequence is HFNADYRKKR…SRLKPIDADT (92 aa). Position 390 is a phosphoserine (Ser-390). A helical transmembrane segment spans residues 424–446; the sequence is IDIYARAVFPAAFAAVNIIYWAA. Topologically, residues 447-449 are extracellular; it reads YTM.

Belongs to the ligand-gated ion channel (TC 1.A.9) family. Gamma-aminobutyric acid receptor (TC 1.A.9.5) subfamily. GABRD sub-subfamily. Heteropentamer, formed by a combination of alpha (GABRA1-6), beta (GABRB1-3), gamma (GABRG1-3), delta (GABRD), epsilon (GABRE), rho (GABRR1-3), pi (GABRP) and theta (GABRQ) chains, each subunit exhibiting distinct physiological and pharmacological properties. In terms of tissue distribution, found in the brain, in cerebellar granule cells. Expressed in lungs, in alveolar epithelium.

It localises to the cell membrane. It carries out the reaction chloride(in) = chloride(out). Functionally, delta subunit of the heteropentameric ligand-gated chloride channel gated by gamma-aminobutyric acid (GABA), a major inhibitory neurotransmitter in the brain. GABA-gated chloride channels, also named GABA(A) receptors (GABAAR), consist of five subunits arranged around a central pore and contain GABA active binding site(s) located at the alpha and beta subunit interface(s). When activated by GABA, GABAARs selectively allow the flow of chloride anions across the cell membrane down their electrochemical gradient. GABAARs containing delta/GABRD subunits are predominantly expressed and located in extrasynaptic or perisynaptic positions on hippocampus and cerebellar granule cells, and contribute to the tonic GABAergic inhibition. GABAAR containing alpha-4-beta-3-delta subunits can simultaneously bind GABA and histamine where histamine binds at the interface of two neighboring beta subunits, which may be involved in the regulation of sleep and wakefulness. This chain is Gamma-aminobutyric acid receptor subunit delta, found in Rattus norvegicus (Rat).